Consider the following 209-residue polypeptide: Large ribosomal subunit protein uL3 (209 aa).

It belongs to the universal ribosomal protein uL3 family. As to quaternary structure, part of the 50S ribosomal subunit. Forms a cluster with proteins L14 and L19.

Functionally, one of the primary rRNA binding proteins, it binds directly near the 3'-end of the 23S rRNA, where it nucleates assembly of the 50S subunit. The polypeptide is Large ribosomal subunit protein uL3 (Pelobacter propionicus (strain DSM 2379 / NBRC 103807 / OttBd1)).